A 330-amino-acid chain; its full sequence is G-protein coupled receptor 74 (330 aa).

7 helical membrane passes run 50–70, 85–105, 121–141, 160–180, 210–230, 252–272, and 295–315; these read LIVV…NLWL, FILI…IFSI, MVVF…LCFD, WVFC…QKAL, VAVS…CIFY, MLLF…LSFI, and LPLL…IYIL. A disulfide bond links C117 and C195.

This sequence belongs to the G-protein coupled receptor 1 family.

It is found in the host membrane. The chain is G-protein coupled receptor 74 (74) from Equus caballus (Horse).